The chain runs to 1270 residues: DNA-directed RNA polymerase subunit beta (1270 aa).

The protein belongs to the RNA polymerase beta chain family. The RNAP catalytic core consists of 2 alpha, 1 beta, 1 beta' and 1 omega subunit. When a sigma factor is associated with the core the holoenzyme is formed, which can initiate transcription.

It catalyses the reaction RNA(n) + a ribonucleoside 5'-triphosphate = RNA(n+1) + diphosphate. Its function is as follows. DNA-dependent RNA polymerase catalyzes the transcription of DNA into RNA using the four ribonucleoside triphosphates as substrates. This is DNA-directed RNA polymerase subunit beta from Phocaeicola vulgatus (strain ATCC 8482 / DSM 1447 / JCM 5826 / CCUG 4940 / NBRC 14291 / NCTC 11154) (Bacteroides vulgatus).